The sequence spans 1085 residues: MFTPQRNRWPETDRKGKAIAFSDEIITPPPQRVLLREDDDWQKFKEVGLLDEASLERKDRDALIEKILKLEKELFDYQHNMGLLLIEKKQWTSTNNELQQAYDEAMEMLKREKTSNAITLNEADKREENLRKALIDEKQFVAELENDLKYWQREHSVVKSTSEAKLEEANALVIGMKEKALEVDRERAIAEEKFSVMNRKSSELERKLKEVETREKVHQREHLSLVTEREAHEAVFYKQREDLQEWEKKLTLEEDRLSEVKRSINHREERVMENERTIEKKEKILENLQQKISVAKSELTEKEESIKIKLNDISLKEKDFEAMKAKVDIKEKELHEFEENLIEREQMEIGKLLDDQKAVLDSRRREFEMELEQMRRSLDEELEGKKAEIEQLQVEISHKEEKLAKREAALEKKEEGVKKKEKDLDARLKTVKEKEKALKAEEKKLHMENERLLEDKECLRKLKDEIEEIGTETTKQESRIREEHESLRITKEERVEFLRLQSELKQQIDKVKQEEELLLKEREELKQDKERFEKEWEALDKKRANITREQNEVAEENEKLRNLQISEKHRLKREEMTSRDNLKRELDGVKMQKESFEADMEDLEMQKRNLDMEFQRQEEAGERDFNERARTYEKRSQEELDNINYTKKLAQREMEEMQYEKLALEREREQISVRKKLLKEQEAEMHKDITELDVLRSSLKEKRKEFICERERFLVFLEKLKSCSSCGEITENFVLSDLRLPDVEDGDKRFGKQKLKAEEALNISPSAENSKRTSLLGKIASKLLSISPIGKTDKVTDLGITVKLPESSQPDDSLDRVSGEDHEPSATEQSFTDSRIQEGPEGSLQSEMKSDKPRRGRGRGRGRGKSVRGRSQATKAVSRDSKPSDGETPRKRQREQTSRITESEQAAGDSDEGVDSITTGGRRKKRQIAVPVSQTPGQTRYQLRRHRNVGTEEDKAQASKGATEKQERVNDDIRKVPSPKETRTPPEGENRENGKAEVLVETVTHEEIVTVETETVFKVNNTGKNPVEDPQLEVGGSGEIREHGEEDDENISMIEEENEGEEEEETERQGNDASIGKKIWVFFTT.

Coiled-coil stretches lie at residues 51–149 and 185–695; these read DEAS…NDLK and RERA…LDVL. K318 is covalently cross-linked (Glycyl lysine isopeptide (Lys-Gly) (interchain with G-Cter in ubiquitin)). A Nuclear localization signal motif is present at residues 404 to 411; the sequence is AKREAALE. K661 participates in a covalent cross-link: Glycyl lysine isopeptide (Lys-Gly) (interchain with G-Cter in ubiquitin). A phosphoserine mark is found at S764, S787, S825, and S843. 2 disordered regions span residues 801-997 and 1020-1077; these read TVKL…GKAE and NNTG…SIGK. The segment covering 813-825 has biased composition (basic and acidic residues); that stretch reads SLDRVSGEDHEPS. Over residues 854–868 the composition is skewed to basic residues; the sequence is RRGRGRGRGRGKSVR. A compositionally biased stretch (basic and acidic residues) spans 877 to 897; it reads VSRDSKPSDGETPRKRQREQT. A Phosphoserine modification is found at S910. Residues 932–941 are compositionally biased toward polar residues; the sequence is VSQTPGQTRY. The span at 949–995 shows a compositional bias: basic and acidic residues; it reads VGTEEDKAQASKGATEKQERVNDDIRKVPSPKETRTPPEGENRENGK. A compositionally biased stretch (acidic residues) spans 1045–1066; the sequence is EEDDENISMIEEENEGEEEEET.

This sequence belongs to the CRWN family. Core component of the LINC complex which is composed of inner nuclear membrane SUN domain-containing proteins coupled to outer nuclear membrane WIP proteins, the nucleoskeletal CRWN/LINC proteins, and, possibly, KAKU4. As to expression, expressed at low levels in roots, leaves, flowers and flower stalks.

It is found in the nucleus membrane. It localises to the nucleus. The protein resides in the nucleoplasm. The protein localises to the cytoplasm. Its subcellular location is the nucleus lamina. In terms of biological role, component of SUN-protein-containing multivariate complexes also called LINC complexes which link the nucleoskeleton and cytoskeleton by providing versatile outer nuclear membrane attachment sites for cytoskeletal filaments. Required for nucleus structure organization (e.g. size and shape). The sequence is that of Protein CROWDED NUCLEI 3 from Arabidopsis thaliana (Mouse-ear cress).